The sequence spans 300 residues: Ribosomal protein L11 methyltransferase (300 aa).

Residues threonine 152, glycine 173, aspartate 195, and asparagine 234 each coordinate S-adenosyl-L-methionine.

This sequence belongs to the methyltransferase superfamily. PrmA family.

It localises to the cytoplasm. It catalyses the reaction L-lysyl-[protein] + 3 S-adenosyl-L-methionine = N(6),N(6),N(6)-trimethyl-L-lysyl-[protein] + 3 S-adenosyl-L-homocysteine + 3 H(+). Functionally, methylates ribosomal protein L11. The polypeptide is Ribosomal protein L11 methyltransferase (Burkholderia multivorans (strain ATCC 17616 / 249)).